Here is a 340-residue protein sequence, read N- to C-terminus: uncharacterized protein (340 aa).

Positions 1 to 25 (MLGIRAMLVMLDYYWIQLITNNDTR) are cleaved as a signal peptide. Residues 26–225 (SNNTDTIFVS…RRYMYLFSVS (200 aa)) lie on the Lumenal side of the membrane. Residues Asn-27, Asn-54, Asn-57, Asn-68, Asn-72, Asn-78, Asn-83, Asn-107, Asn-118, Asn-146, Asn-173, and Asn-180 are each glycosylated (N-linked (GlcNAc...) asparagine; by host). A helical membrane pass occupies residues 226–246 (CAGITGTVSIILVSLSLLILI). Residues 247–340 (CYYRCGRLLI…PMHMVVCMPA (94 aa)) are Cytoplasmic-facing.

It belongs to the HHV-5 UL20 protein family.

It is found in the host endoplasmic reticulum membrane. This is an uncharacterized protein from Human cytomegalovirus (strain AD169) (HHV-5).